A 276-amino-acid polypeptide reads, in one-letter code: Large ribosomal subunit protein uL2 (276 aa).

The segment at 219 to 268 (TVRGSVMNPNDHPHGGGEGRQPVGRKSPMTPWGKPALGLKTRNKKAKSSK) is disordered.

Belongs to the universal ribosomal protein uL2 family. Part of the 50S ribosomal subunit. Forms a bridge to the 30S subunit in the 70S ribosome.

Its function is as follows. One of the primary rRNA binding proteins. Required for association of the 30S and 50S subunits to form the 70S ribosome, for tRNA binding and peptide bond formation. It has been suggested to have peptidyltransferase activity; this is somewhat controversial. Makes several contacts with the 16S rRNA in the 70S ribosome. In Lactococcus lactis subsp. cremoris (strain MG1363), this protein is Large ribosomal subunit protein uL2.